A 155-amino-acid polypeptide reads, in one-letter code: MKTPKMNVESFNLDHTKVKAPYVRVADRKKGVNGDVIVKYDVRFKQPNQDHMDMPSLHSLEHLVAEIIRNHANYVVDWSPMGCQTGFYLTVLNHDNYTEVLEVLEKTMQDVLKATEVPASNEKQCGWAANHTLEGAKNLARAFLDKRAEWSEVGV.

Positions 58, 62, and 125 each coordinate Fe cation.

Belongs to the LuxS family. In terms of assembly, homodimer. It depends on Fe cation as a cofactor.

The catalysed reaction is S-(5-deoxy-D-ribos-5-yl)-L-homocysteine = (S)-4,5-dihydroxypentane-2,3-dione + L-homocysteine. Involved in the synthesis of autoinducer 2 (AI-2) which is secreted by bacteria and is used to communicate both the cell density and the metabolic potential of the environment. The regulation of gene expression in response to changes in cell density is called quorum sensing. Catalyzes the transformation of S-ribosylhomocysteine (RHC) to homocysteine (HC) and 4,5-dihydroxy-2,3-pentadione (DPD). This Helicobacter pylori (strain P12) protein is S-ribosylhomocysteine lyase.